Reading from the N-terminus, the 253-residue chain is UPF0758 protein Bxeno_A3578 (253 aa).

The region spanning 131–253 (LINSPEAVEN…VYSFARAGWP (123 aa)) is the MPN domain. 3 residues coordinate Zn(2+): His-202, His-204, and Asp-215. Positions 202-215 (HNHPSGAVQPSASD) match the JAMM motif motif.

This sequence belongs to the UPF0758 family.

The chain is UPF0758 protein Bxeno_A3578 from Paraburkholderia xenovorans (strain LB400).